Reading from the N-terminus, the 472-residue chain is 3-isopropylmalate dehydratase large subunit (472 aa).

Cysteine 353, cysteine 414, and cysteine 417 together coordinate [4Fe-4S] cluster.

Belongs to the aconitase/IPM isomerase family. LeuC type 1 subfamily. As to quaternary structure, heterodimer of LeuC and LeuD. Requires [4Fe-4S] cluster as cofactor.

The catalysed reaction is (2R,3S)-3-isopropylmalate = (2S)-2-isopropylmalate. The protein operates within amino-acid biosynthesis; L-leucine biosynthesis; L-leucine from 3-methyl-2-oxobutanoate: step 2/4. Catalyzes the isomerization between 2-isopropylmalate and 3-isopropylmalate, via the formation of 2-isopropylmaleate. This is 3-isopropylmalate dehydratase large subunit from Psychrobacter arcticus (strain DSM 17307 / VKM B-2377 / 273-4).